The following is a 481-amino-acid chain: ATP synthase subunit beta (481 aa).

160–167 is an ATP binding site; it reads GGAGVGKT.

This sequence belongs to the ATPase alpha/beta chains family. In terms of assembly, F-type ATPases have 2 components, CF(1) - the catalytic core - and CF(0) - the membrane proton channel. CF(1) has five subunits: alpha(3), beta(3), gamma(1), delta(1), epsilon(1). CF(0) has three main subunits: a(1), b(2) and c(9-12). The alpha and beta chains form an alternating ring which encloses part of the gamma chain. CF(1) is attached to CF(0) by a central stalk formed by the gamma and epsilon chains, while a peripheral stalk is formed by the delta and b chains.

Its subcellular location is the cell inner membrane. The catalysed reaction is ATP + H2O + 4 H(+)(in) = ADP + phosphate + 5 H(+)(out). Produces ATP from ADP in the presence of a proton gradient across the membrane. The catalytic sites are hosted primarily by the beta subunits. The sequence is that of ATP synthase subunit beta from Anaeromyxobacter sp. (strain Fw109-5).